The primary structure comprises 397 residues: Metallophosphoesterase 1 (397 aa).

Residues 27-47 (IAVVFAVLLFCEFLIYYLAIF) form a helical membrane-spanning segment. A divalent metal cation-binding residues include Asp-77, Asp-119, Asn-157, His-250, His-304, and His-306. The helical transmembrane segment at 357–377 (VVLIIYCGMVGFLVVLTLTHF) threads the bilayer. Residues 393–397 (KRKTR) carry the Di-lysine motif motif.

The protein belongs to the metallophosphoesterase superfamily. MPPE1 family. Interacts with GPI-anchor proteins (via the GPI portion). Interacts with TMED10. It depends on Mn(2+) as a cofactor.

Its subcellular location is the endoplasmic reticulum-Golgi intermediate compartment membrane. Functionally, metallophosphoesterase that catalyzes the removal of a side-chain ethanolamine-phosphate (EtNP) from the second mannose of the GPI-anchor protein intermediate. Participates in the glycan remodeling steps of GPI-anchor maturation to allow an efficient transport of GPI-anchor proteins from the endoplasmic reticulum to the Golgi. The polypeptide is Metallophosphoesterase 1 (Pongo abelii (Sumatran orangutan)).